The chain runs to 623 residues: Probable methyltransferase PMT8 (623 aa).

At 1–13 (MMRGRSDGGLKKR) the chain is on the cytoplasmic side. A helical; Signal-anchor for type II membrane protein membrane pass occupies residues 14 to 34 (LIASVCVVALFVCFLFMYYGS). Residues 35-623 (SSQGASALEY…LTSESLRDSE (589 aa)) are Lumenal-facing. N-linked (GlcNAc...) asparagine glycosylation is found at Asn204, Asn350, and Asn588.

This sequence belongs to the methyltransferase superfamily.

It is found in the golgi apparatus membrane. This chain is Probable methyltransferase PMT8, found in Arabidopsis thaliana (Mouse-ear cress).